The sequence spans 150 residues: Large ribosomal subunit protein bL9 (150 aa).

Belongs to the bacterial ribosomal protein bL9 family.

Functionally, binds to the 23S rRNA. The protein is Large ribosomal subunit protein bL9 of Alteromonas mediterranea (strain DSM 17117 / CIP 110805 / LMG 28347 / Deep ecotype).